The chain runs to 262 residues: Phosphatidylserine decarboxylase proenzyme (262 aa).

Active-site charge relay system; for autoendoproteolytic cleavage activity residues include Asp-86, His-142, and Ser-226. Residue Ser-226 is the Schiff-base intermediate with substrate; via pyruvic acid; for decarboxylase activity of the active site. At Ser-226 the chain carries Pyruvic acid (Ser); by autocatalysis.

The protein belongs to the phosphatidylserine decarboxylase family. PSD-B subfamily. Prokaryotic type I sub-subfamily. In terms of assembly, heterodimer of a large membrane-associated beta subunit and a small pyruvoyl-containing alpha subunit. The cofactor is pyruvate. Is synthesized initially as an inactive proenzyme. Formation of the active enzyme involves a self-maturation process in which the active site pyruvoyl group is generated from an internal serine residue via an autocatalytic post-translational modification. Two non-identical subunits are generated from the proenzyme in this reaction, and the pyruvate is formed at the N-terminus of the alpha chain, which is derived from the carboxyl end of the proenzyme. The autoendoproteolytic cleavage occurs by a canonical serine protease mechanism, in which the side chain hydroxyl group of the serine supplies its oxygen atom to form the C-terminus of the beta chain, while the remainder of the serine residue undergoes an oxidative deamination to produce ammonia and the pyruvoyl prosthetic group on the alpha chain. During this reaction, the Ser that is part of the protease active site of the proenzyme becomes the pyruvoyl prosthetic group, which constitutes an essential element of the active site of the mature decarboxylase.

Its subcellular location is the cell membrane. The enzyme catalyses a 1,2-diacyl-sn-glycero-3-phospho-L-serine + H(+) = a 1,2-diacyl-sn-glycero-3-phosphoethanolamine + CO2. It participates in phospholipid metabolism; phosphatidylethanolamine biosynthesis; phosphatidylethanolamine from CDP-diacylglycerol: step 2/2. Its function is as follows. Catalyzes the formation of phosphatidylethanolamine (PtdEtn) from phosphatidylserine (PtdSer). This is Phosphatidylserine decarboxylase proenzyme from Bacillus cereus (strain B4264).